The sequence spans 300 residues: MAPSNLPAIFNPTQQDIEMLLAAQCHLGAKNLQVHMEPYLWKTRPDGVNVLNIGKTWEKIVLAARIIVAIDNPADICVISARPYGQRAVLKFASHTGATAIAGRFTPGNFTNYITRSFREPRLVIVTDPRTDAQAIKEASYVNIPVIALCDGDSPTEYVDVAIPTNNKGRHAIGLVWWMLAREVLRLRGTLANRETEWDVMTDLYFYRDPEAEENKDSAGVEEAKVPGADEVGPAAVADGFTSEWEVSGASAGAFTAQAAAAPGASWDADTTDWAASGEAQTGNEGWGTEAAAPAATTQW.

Positions 278–300 are disordered; sequence GEAQTGNEGWGTEAAAPAATTQW.

It belongs to the universal ribosomal protein uS2 family. Component of the small ribosomal subunit. Mature ribosomes consist of a small (40S) and a large (60S) subunit. The 40S subunit contains about 33 different proteins and 1 molecule of RNA (18S). The 60S subunit contains about 49 different proteins and 3 molecules of RNA (25S, 5.8S and 5S). Interacts with rps21.

The protein resides in the cytoplasm. In terms of biological role, required for the assembly and/or stability of the 40S ribosomal subunit. Required for the processing of the 20S rRNA-precursor to mature 18S rRNA in a late step of the maturation of 40S ribosomal subunits. This chain is Small ribosomal subunit protein uS2 (rps0), found in Pyrenophora tritici-repentis (strain Pt-1C-BFP) (Wheat tan spot fungus).